Reading from the N-terminus, the 1321-residue chain is MVLTLGESWPVLVGRRFLSLSAADGSDGSHDSWDVERVAEWPWLSGTIRAVSHTDVTKKDLKVCVEFDGESWRKRRWIEVYSLLRRAFLVEHNLVLAERKSPEISERIVQWPAITYKPLLDKAGLGSITSVRFLGDQQRVFLSKDLLKPIQDVNSLRLSLTDNQIVSKEFQALIVKHLDESHLLKGDKNLVGSEVKIYSLDPSTQWFSATVINGNPASKTLQVNCEEIPALKIVDPSLIHVEVVHDNLVTCGNSARIGAVKRKSSENNGTLVSKQAKSCSEASPSMCPVQSVPTTVFKEILLGCTAATPPSKDPRQQSTPQAANSPPNLGAKIPQGCHKQSLPEEISSCLNTKSEALRTKPDVCKAGLLSKSSQIGTGDLKILTEPKGSCTQPKTNTDQENRLESVPQALTGLPKECLPTKASSKAELEIANPPELQKHLEHAPSPSDVSNAPEVKAGVNSDSPNNCSGKKVEPSALACRSQNLKESSVKVDNESCCSRSNNKIQNAPSRKSVLTDPAKLKKLQQSGEAFVQDDSCVNIVAQLPKCRECRLDSLRKDKEQQKDSPVFCRFFHFRRLQFNKHGVLRVEGFLTPNKYDNEAIGLWLPLTKNVVGIDLDTAKYILANIGDHFCQMVISEKEAMSTIEPHRQVAWKRAVKGVREMCDVCDTTIFNLHWVCPRCGFGVCVDCYRMKRKNCQQGAAYKTFSWLKCVKSQIHEPENLMPTQIIPGKALYDVGDIVHSVRAKWGIKANCPCSNRQFKLFSKPASKEDLKQTSLAGEKPTLGAVLQQNPSVLEPAAVGGEAASKPAGSMKPACPASTSPLNWLADLTSGNVNKENKEKQPTMPILKNEIKCLPPLPPLSKSSTVLHTFNSTILTPVSNNNSGFLRNLLNSSTGKTENGLKNTPKILDDIFASLVQNKTTSDLSKRPQGLTIKPSILGFDTPHYWLCDNRLLCLQDPNNKSNWNVFRECWKQGQPVMVSGVHHKLNSELWKPESFRKEFGEQEVDLVNCRTNEIITGATVGDFWDGFEDVPNRLKNEKEPMVLKLKDWPPGEDFRDMMPSRFDDLMANIPLPEYTRRDGKLNLASRLPNYFVRPDLGPKMYNAYGLITPEDRKYGTTNLHLDVSDAANVMVYVGIPKGQCEQEEEVLKTIQDGDSDELTIKRFIEGKEKPGALWHIYAAKDTEKIREFLKKVSEEQGQENPADHDPIHDQSWYLDRSLRKRLHQEYGVQGWAIVQFLGDVVFIPAGAPHQVHNLYSCIKVAEDFVSPEHVKHCFWLTQEFRYLSQTHTNHEDKLQVKNVIYHAVKDAVAMLKASESSFGKP.

S264 and S325 each carry phosphoserine. Disordered stretches follow at residues 307-336, 383-402, and 438-472; these read ATPP…IPQG, LTEP…QENR, and KHLE…GKKV. A compositionally biased stretch (polar residues) spans 316 to 327; it reads QQSTPQAANSPP. Residue S445 is modified to Phosphoserine. A C6-type zinc finger spans residues 662-687; it reads CDVCDTTIFNLHWVCPRCGFGVCVDC. S766 carries the post-translational modification Phosphoserine. An LXXLL motif motif is present at residues 885–889; that stretch reads LRNLL. K895 is subject to N6-acetyllysine. The 224-residue stretch at 1058 to 1281 folds into the JmjC domain; that stretch reads MPSRFDDLMA…HCFWLTQEFR (224 aa). Fe cation is bound by residues H1120, D1122, and H1249.

It belongs to the JHDM2 histone demethylase family. In terms of assembly, interacts with VRK1. Fe(2+) is required as a cofactor.

It localises to the cytoplasm. It is found in the nucleus. The enzyme catalyses N(6),N(6)-dimethyl-L-lysyl(9)-[histone H3] + 2 2-oxoglutarate + 2 O2 = L-lysyl(9)-[histone H3] + 2 formaldehyde + 2 succinate + 2 CO2. In terms of biological role, histone demethylase that specifically demethylates 'Lys-9' of histone H3, thereby playing a central role in histone code. Preferentially demethylates mono- and dimethylated H3 'Lys-9' residue, with a preference for dimethylated residue, while it has weak or no activity on trimethylated H3 'Lys-9'. Demethylation of Lys residue generates formaldehyde and succinate. Involved in hormone-dependent transcriptional activation, by participating in recruitment to androgen-receptor target genes, resulting in H3 'Lys-9' demethylation and transcriptional activation. Involved in spermatogenesis by regulating expression of target genes such as PRM1 and TNP1 which are required for packaging and condensation of sperm chromatin. Involved in obesity resistance through regulation of metabolic genes such as PPARA and UCP1. This Homo sapiens (Human) protein is Lysine-specific demethylase 3A (KDM3A).